A 371-amino-acid chain; its full sequence is Flagellar P-ring protein (371 aa).

The first 28 residues, 1-28, serve as a signal peptide directing secretion; the sequence is MPARPTPPAVPLALALAAALAAPAPAAA.

This sequence belongs to the FlgI family. As to quaternary structure, the basal body constitutes a major portion of the flagellar organelle and consists of four rings (L,P,S, and M) mounted on a central rod.

It is found in the periplasm. It localises to the bacterial flagellum basal body. Assembles around the rod to form the L-ring and probably protects the motor/basal body from shearing forces during rotation. This chain is Flagellar P-ring protein, found in Anaeromyxobacter dehalogenans (strain 2CP-C).